The following is a 94-amino-acid chain: Cell division protein FtsB (94 aa).

The Cytoplasmic portion of the chain corresponds to 1–3 (MRA). Residues 4–21 (FAVLLIIALGWLQYTLWF) form a helical membrane-spanning segment. Topologically, residues 22–94 (GKNGMEDYAQ…YRIIDENSEE (73 aa)) are periplasmic. Residues 40–60 (EEVNQGLRNRNGQMFAEIDDL) are a coiled coil.

The protein belongs to the FtsB family. Part of a complex composed of FtsB, FtsL and FtsQ.

It is found in the cell inner membrane. Functionally, essential cell division protein. May link together the upstream cell division proteins, which are predominantly cytoplasmic, with the downstream cell division proteins, which are predominantly periplasmic. This is Cell division protein FtsB from Aliivibrio salmonicida (strain LFI1238) (Vibrio salmonicida (strain LFI1238)).